The chain runs to 499 residues: Glutamyl-tRNA(Gln) amidotransferase subunit A (499 aa).

Active-site charge relay system residues include lysine 76 and serine 151. Residue serine 175 is the Acyl-ester intermediate of the active site.

It belongs to the amidase family. GatA subfamily. As to quaternary structure, heterotrimer of A, B and C subunits.

The enzyme catalyses L-glutamyl-tRNA(Gln) + L-glutamine + ATP + H2O = L-glutaminyl-tRNA(Gln) + L-glutamate + ADP + phosphate + H(+). In terms of biological role, allows the formation of correctly charged Gln-tRNA(Gln) through the transamidation of misacylated Glu-tRNA(Gln) in organisms which lack glutaminyl-tRNA synthetase. The reaction takes place in the presence of glutamine and ATP through an activated gamma-phospho-Glu-tRNA(Gln). The protein is Glutamyl-tRNA(Gln) amidotransferase subunit A of Rhodopirellula baltica (strain DSM 10527 / NCIMB 13988 / SH1).